We begin with the raw amino-acid sequence, 336 residues long: Prenytransferase ascA (336 aa).

Positions 1–26 are disordered; the sequence is MAAKSRSPKRGTSEKTPLVEKEAPYQ. Residues 11–23 show a composition bias toward basic and acidic residues; that stretch reads GTSEKTPLVEKEA. The next 8 membrane-spanning stretches (helical) occupy residues 52 to 72, 74 to 94, 131 to 151, 179 to 199, 206 to 226, 251 to 271, 272 to 292, and 314 to 334; these read PHGNYMIYFPHIIGLMYASAI, PTELSVLGHRAAIFAIWTFLM, GHVFTLILTLLGFAAIQSLPI, VILGSTLASTIALSAYSVGLP, FVPTLCLSATIMLLVVFYDVV, LEGLFAFITLSIAGSLTTLGY, LVGMGHWFYLFSVGGLTFGLV, and FAILNLLTGFIMEYATKDYVV.

The protein belongs to the UbiA prenyltransferase family. Mg(2+) is required as a cofactor.

The protein localises to the membrane. The catalysed reaction is orsellinate + (2E,6E)-farnesyl diphosphate = ilicicolinate B + diphosphate. It participates in secondary metabolite biosynthesis; terpenoid biosynthesis. Prenytransferase; part of the asc-1 gene cluster that mediates the biosynthesis of both ascochlorin and ascofuranone, a strong inhibitor of cyanide-insensitive alternative oxidases and a promising drug candidate against African trypanosomiasis. The first step in the pathway is performed by the non-reducing polyketide synthase ascC that produces orsellinic acid by condensing acetyl-CoA with 3 malonyl-CoA units. Orsellinic acid is then prenylated by the prenyltransferase ascA to yield ilicicolinic acid B. Ilicicolinic acid B is further reduced to ilicicolin B by the reductase ascB. The halogenase ascD then chlorinates ilicicolin B to produce ilicicolin A which is converted to ilicicolin A epoxide by the cytochrome P450 monooxygenase ascE that catalyzes stereoselective epoxidation of the terminal double bond of the prenyl group. Ilicicolin A epoxide is the last common precursor for the biosynthesis of ascofuranone and ascochlorin. The terpene cyclase ascF produces a monocyclic terpene, and the cyclization reaction is proposed to be initiated by protonation of the terminal epoxide of ilicicolin A epoxide to generate a monocyclic tertiarycation, which is followed by a series of hydride and methyl shifts with abstraction of proton, leading to the formation of the (14S,15R,19R)-trimethylcyclohexanone ring structure of ilicicolin C, which is finally reduced to ascochlorin by the dehydrogenase ascG. On the other hand, ilicicolin A epoxide is hydroxylated by the cytochrome P450 monooxygenase ascH, and the resultant product is cyclized by the terpene cyclase ascI to ascofuranol via protonation-initiated epoxide ring opening, which facilitates the 6-endo-tet cyclization to form the tetrahy-drofuran ring. Finally, ascofuranol is oxidized into ascofuranone by ascJ. The sequence is that of Prenytransferase ascA from Acremonium egyptiacum (Oospora egyptiaca).